Reading from the N-terminus, the 457-residue chain is Cysteine--tRNA ligase (457 aa).

Cys-27 lines the Zn(2+) pocket. The 'HIGH' region motif lies at 29 to 39 (PTVYDFAHIGN). Residues Cys-211, His-236, and Glu-240 each contribute to the Zn(2+) site. A 'KMSKS' region motif is present at residues 269 to 273 (KMSKS). Residue Lys-272 coordinates ATP.

The protein belongs to the class-I aminoacyl-tRNA synthetase family. Monomer. It depends on Zn(2+) as a cofactor.

It localises to the cytoplasm. The enzyme catalyses tRNA(Cys) + L-cysteine + ATP = L-cysteinyl-tRNA(Cys) + AMP + diphosphate. This chain is Cysteine--tRNA ligase, found in Ehrlichia ruminantium (strain Gardel).